We begin with the raw amino-acid sequence, 185 residues long: Peptidyl-tRNA hydrolase (185 aa).

Tyr14 serves as a coordination point for tRNA. His19 functions as the Proton acceptor in the catalytic mechanism. TRNA is bound by residues Tyr65, Asn67, and Asn113.

This sequence belongs to the PTH family. Monomer.

It is found in the cytoplasm. The enzyme catalyses an N-acyl-L-alpha-aminoacyl-tRNA + H2O = an N-acyl-L-amino acid + a tRNA + H(+). In terms of biological role, hydrolyzes ribosome-free peptidyl-tRNAs (with 1 or more amino acids incorporated), which drop off the ribosome during protein synthesis, or as a result of ribosome stalling. Functionally, catalyzes the release of premature peptidyl moieties from peptidyl-tRNA molecules trapped in stalled 50S ribosomal subunits, and thus maintains levels of free tRNAs and 50S ribosomes. This chain is Peptidyl-tRNA hydrolase, found in Rickettsia prowazekii (strain Madrid E).